A 423-amino-acid chain; its full sequence is Putative galacturan 1,4-alpha-galacturonidase C (423 aa).

An N-terminal signal peptide occupies residues 1–20 (MRFSIISLVSLPLFLGLTYA). 5 N-linked (GlcNAc...) asparagine glycosylation sites follow: N100, N120, N150, N173, and N185. Catalysis depends on D229, which acts as the Proton donor. A disulfide bridge links C231 with C248. N245 is a glycosylation site (N-linked (GlcNAc...) asparagine). The active site involves N252. N-linked (GlcNAc...) asparagine glycosylation is found at N344 and N362. An intrachain disulfide couples C379 to C385. An N-linked (GlcNAc...) asparagine glycan is attached at N400. A disulfide bond links C409 and C423.

The protein belongs to the glycosyl hydrolase 28 family.

The protein resides in the secreted. It catalyses the reaction [(1-&gt;4)-alpha-D-galacturonosyl](n) + H2O = alpha-D-galacturonate + [(1-&gt;4)-alpha-D-galacturonosyl](n-1). Specific in hydrolyzing the terminal glycosidic bond of polygalacturonic acid and oligogalacturonates. The protein is Putative galacturan 1,4-alpha-galacturonidase C (rgxC) of Neosartorya fischeri (strain ATCC 1020 / DSM 3700 / CBS 544.65 / FGSC A1164 / JCM 1740 / NRRL 181 / WB 181) (Aspergillus fischerianus).